Reading from the N-terminus, the 487-residue chain is Anthocyanidin 3-O-glucosyltransferase 5 (487 aa).

The active-site Proton acceptor is the His22. Residue His22 coordinates an anthocyanidin. The active-site Charge relay is the Asp119. Positions 354, 369, 372, 373, 374, and 377 each coordinate UDP-alpha-D-glucose. Ala392 is a binding site for an anthocyanidin. UDP-alpha-D-glucose contacts are provided by Glu393 and Gln394.

The protein belongs to the UDP-glycosyltransferase family. Faintly expressed in cotyledons.

The enzyme catalyses an anthocyanidin + UDP-alpha-D-glucose + H(+) = an anthocyanidin 3-O-beta-D-glucoside + UDP. It participates in pigment biosynthesis; anthocyanin biosynthesis. Functionally, in the presence of other necessary color factors, this glycosylation reaction allows the accumulation of anthocyanin pigments. The polypeptide is Anthocyanidin 3-O-glucosyltransferase 5 (GT5) (Manihot esculenta (Cassava)).